Consider the following 152-residue polypeptide: Ribosome maturation factor RimP (152 aa).

This sequence belongs to the RimP family.

Its subcellular location is the cytoplasm. Required for maturation of 30S ribosomal subunits. The sequence is that of Ribosome maturation factor RimP from Pseudomonas aeruginosa (strain LESB58).